The chain runs to 71 residues: Allergen Art v 2 (71 aa).

In terms of processing, glycosylated. High-mannose oligosaccharides (Man(5-9)GlcNAc(2)).

The protein is Allergen Art v 2 of Artemisia vulgaris (Mugwort).